A 559-amino-acid polypeptide reads, in one-letter code: Formate--tetrahydrofolate ligase (559 aa).

Residue 68-75 (TPAGEGKT) coordinates ATP.

The protein belongs to the formate--tetrahydrofolate ligase family.

The catalysed reaction is (6S)-5,6,7,8-tetrahydrofolate + formate + ATP = (6R)-10-formyltetrahydrofolate + ADP + phosphate. It participates in one-carbon metabolism; tetrahydrofolate interconversion. The sequence is that of Formate--tetrahydrofolate ligase from Rhizobium etli (strain ATCC 51251 / DSM 11541 / JCM 21823 / NBRC 15573 / CFN 42).